Here is a 367-residue protein sequence, read N- to C-terminus: Alanine racemase (367 aa).

Lys34 functions as the Proton acceptor; specific for D-alanine in the catalytic mechanism. N6-(pyridoxal phosphate)lysine is present on Lys34. Position 129 (Arg129) interacts with substrate. Tyr251 (proton acceptor; specific for L-alanine) is an active-site residue. Met299 serves as a coordination point for substrate.

The protein belongs to the alanine racemase family. Requires pyridoxal 5'-phosphate as cofactor.

It carries out the reaction L-alanine = D-alanine. The protein operates within amino-acid biosynthesis; D-alanine biosynthesis; D-alanine from L-alanine: step 1/1. Functionally, catalyzes the interconversion of L-alanine and D-alanine. May also act on other amino acids. This chain is Alanine racemase (alr), found in Thiobacillus denitrificans (strain ATCC 25259 / T1).